The chain runs to 597 residues: Lipoprotein LpqB (597 aa).

The first 28 residues, 1–28 (MTPGSRSAMRSRSVCGAIALAVLVTVSG), serve as a signal peptide directing secretion. A lipid anchor (N-palmitoyl cysteine) is attached at Cys29. A lipid anchor (S-diacylglycerol cysteine) is attached at Cys29. Residues 39–51 (QAIGTINRDSPGS) are compositionally biased toward polar residues. The interval 39 to 59 (QAIGTINRDSPGSSVAAPAPG) is disordered.

This sequence belongs to the LpqB lipoprotein family.

The protein localises to the cell membrane. The protein is Lipoprotein LpqB of Rhodococcus opacus (strain B4).